The chain runs to 324 residues: DNA repair and recombination protein RadA (324 aa).

Residue 114-121 (GEFGSGKT) participates in ATP binding.

It belongs to the eukaryotic RecA-like protein family.

Its function is as follows. Involved in DNA repair and in homologous recombination. Binds and assemble on single-stranded DNA to form a nucleoprotein filament. Hydrolyzes ATP in a ssDNA-dependent manner and promotes DNA strand exchange between homologous DNA molecules. The chain is DNA repair and recombination protein RadA from Sulfurisphaera tokodaii (strain DSM 16993 / JCM 10545 / NBRC 100140 / 7) (Sulfolobus tokodaii).